Consider the following 662-residue polypeptide: Sodium/glucose cotransporter 1 (662 aa).

Residues 1–24 lie on the Extracellular side of the membrane; that stretch reads MDSSTLSPLTTSTAAPLESYERIR. The chain crosses the membrane as a helical span at residues 25-47; that stretch reads NAADISVIVIYFLVVMAVGLWAM. Residues 48–66 are Cytoplasmic-facing; it reads FSTNRGTVGGFFLAGRSMV. The chain crosses the membrane as a helical span at residues 67 to 90; that stretch reads WWPIGASLFASNIGSGHFVGLAGT. Residues 91 to 95 are Extracellular-facing; the sequence is GAASG. The helical transmembrane segment at 96-117 threads the bilayer; sequence IATGGFEWNALIMVVVLGWVFV. The Cytoplasmic portion of the chain corresponds to 118–139; the sequence is PIYIRAGVVTMPEYLQKRFGGK. The chain crosses the membrane as a helical span at residues 140–169; sequence RIQIYLSILSLLLYIFTKISADIFSGAIFI. Topologically, residues 170-176 are extracellular; that stretch reads QLTLGLD. A helical membrane pass occupies residues 177 to 193; it reads IYVAIIILLVITGLYTI. The Cytoplasmic segment spans residues 194 to 202; sequence TGGLAAVIY. A helical transmembrane segment spans residues 203–221; sequence TDTLQTAIMMVGSVILTGF. The Extracellular portion of the chain corresponds to 222–275; sequence AFHEVGGYEAFTEKYMRAIPSQISYGNTSIPQKCYTPREDAFHIFRDAITGDIP. N-linked (GlcNAc...) asparagine glycosylation is present at Asn248. 5 cysteine pairs are disulfide-bonded: Cys255-Cys511, Cys255-Cys608, Cys345-Cys351, Cys355-Cys361, and Cys517-Cys522. A helical membrane pass occupies residues 276–295; it reads WPGLVFGMSILTLWYWCTDQ. Over 296 to 309 the chain is Cytoplasmic; the sequence is VIVQRCLSAKNLSH. The helical transmembrane segment at 310 to 331 threads the bilayer; that stretch reads VKAGCILCGYLKVMPMFLIVMM. Topologically, residues 332–375 are extracellular; that stretch reads GMVSRILYTDKVACVVPSECERYCGTRVGCTNIAFPTLVVELMP. A helical membrane pass occupies residues 376-406; it reads NGLRGLMLSVMMASLMSSLTSIFNSASTLFT. Topologically, residues 407 to 422 are cytoplasmic; sequence MDIYTKIRKKASEKEL. The chain crosses the membrane as a helical span at residues 423–444; the sequence is MIAGRLFMLFLIGISIAWVPIV. Over 445–451 the chain is Extracellular; the sequence is QSAQSGQ. A helical transmembrane segment spans residues 452–477; it reads LFDYIQSITSYLGPPIAAVFLLAIFW. A D-glucose-binding site is contributed by Gln457. Residues 478–481 are Cytoplasmic-facing; it reads KRVN. The chain crosses the membrane as a helical span at residues 482–504; sequence EPGAFWGLVLGFLIGISRMITEF. Residues 505-525 are Extracellular-facing; it reads AYGTGSCMEPSNCPTIICGVH. A helical membrane pass occupies residues 526 to 547; the sequence is YLYFAIILFVISIITVVVVSLF. The Cytoplasmic segment spans residues 548-642; the sequence is TKPIPDVHLY…TSEHPLWRTV (95 aa). Residues 643-660 form a helical membrane-spanning segment; sequence VNINGVILLAVAVFCYAY. At 661–662 the chain is on the extracellular side; that stretch reads FA.

Belongs to the sodium:solute symporter (SSF) (TC 2.A.21) family. Post-translationally, N-glycosylation is not necessary for the cotransporter function. Found predominantly in intestine, renal cortex and in outer renal medulla.

The protein localises to the apical cell membrane. It catalyses the reaction D-glucose(out) + 2 Na(+)(out) = D-glucose(in) + 2 Na(+)(in). The enzyme catalyses D-galactose(out) + 2 Na(+)(out) = D-galactose(in) + 2 Na(+)(in). Enhanced by the interaction with PDZK1IP1/MAP17; but unlike SLC5A2/SGLT2, PDZK1IP1 is not essential for SLC5A1 transporter activity. Possibly modulated by cholesterol binding. Functionally, electrogenic Na(+)-coupled sugar symporter that actively transports D-glucose or D-galactose at the plasma membrane, with a Na(+) to sugar coupling ratio of 2:1. Transporter activity is driven by a transmembrane Na(+) electrochemical gradient set by the Na(+)/K(+) pump. Has a primary role in the transport of dietary monosaccharides from enterocytes to blood. Responsible for the absorption of D-glucose or D-galactose across the apical brush-border membrane of enterocytes, whereas basolateral exit is provided by GLUT2. Additionally, functions as a D-glucose sensor in enteroendocrine cells, triggering the secretion of the incretins GCG and GIP that control food intake and energy homeostasis. Together with SGLT2, functions in reabsorption of D-glucose from glomerular filtrate, playing a nonredundant role in the S3 segment of the proximal tubules. Transports D-glucose into endometrial epithelial cells, controlling glycogen synthesis and nutritional support for the embryo as well as the decidual transformation of endometrium prior to conception. Acts as a water channel enabling passive water transport in response to the osmotic gradient created upon sugar and Na(+) uptake. Has high water conductivity comparable to aquaporins and therefore is expected to play an important role in transepithelial water permeability, especially in the small intestine. The sequence is that of Sodium/glucose cotransporter 1 (SLC5A1) from Oryctolagus cuniculus (Rabbit).